Reading from the N-terminus, the 299-residue chain is tRNA dimethylallyltransferase (299 aa).

An ATP-binding site is contributed by 22 to 29 (GPTASGKT). 24–29 (TASGKT) provides a ligand contact to substrate. Interaction with substrate tRNA stretches follow at residues 47-50 (DSRQ) and 172-176 (QRLLR).

It belongs to the IPP transferase family. As to quaternary structure, monomer. It depends on Mg(2+) as a cofactor.

The catalysed reaction is adenosine(37) in tRNA + dimethylallyl diphosphate = N(6)-dimethylallyladenosine(37) in tRNA + diphosphate. Its function is as follows. Catalyzes the transfer of a dimethylallyl group onto the adenine at position 37 in tRNAs that read codons beginning with uridine, leading to the formation of N6-(dimethylallyl)adenosine (i(6)A). This Endomicrobium trichonymphae protein is tRNA dimethylallyltransferase.